Consider the following 140-residue polypeptide: Nucleoside diphosphate kinase (140 aa).

ATP-binding residues include K11, F59, R87, T93, R104, and N114. H117 serves as the catalytic Pros-phosphohistidine intermediate.

This sequence belongs to the NDK family. Homotetramer. The cofactor is Mg(2+).

It is found in the cytoplasm. It catalyses the reaction a 2'-deoxyribonucleoside 5'-diphosphate + ATP = a 2'-deoxyribonucleoside 5'-triphosphate + ADP. The enzyme catalyses a ribonucleoside 5'-diphosphate + ATP = a ribonucleoside 5'-triphosphate + ADP. In terms of biological role, major role in the synthesis of nucleoside triphosphates other than ATP. The ATP gamma phosphate is transferred to the NDP beta phosphate via a ping-pong mechanism, using a phosphorylated active-site intermediate. The polypeptide is Nucleoside diphosphate kinase (Methylorubrum extorquens (strain CM4 / NCIMB 13688) (Methylobacterium extorquens)).